Reading from the N-terminus, the 236-residue chain is Transmembrane protein 70 homolog, mitochondrial (236 aa).

A mitochondrion-targeting transit peptide spans 1–64 (MLGLRAMLPK…WLSVKSTKTE (64 aa)). Helical transmembrane passes span 83-103 (MVKF…PILL) and 116-136 (VFLC…LHFI).

This sequence belongs to the TMEM70 family. In terms of assembly, associates with mitochondrial complex I assembly intermediates during its biogenesis.

The protein localises to the mitochondrion membrane. Its function is as follows. Scaffold protein that participates in the c-ring assembly of mitochondrial ATP synthase (F(1)F(0) ATP synthase or complex V). Also binds the mitochondrial proton-transporting ATP synthase complex I and may play a role in the stability of its membrane-bound subassemblies. The polypeptide is Transmembrane protein 70 homolog, mitochondrial (Drosophila melanogaster (Fruit fly)).